The chain runs to 303 residues: Quinolinate synthase (303 aa).

Iminosuccinate contacts are provided by H24 and S41. [4Fe-4S] cluster is bound at residue C86. Iminosuccinate contacts are provided by residues 112-114 and S129; that span reads YVN. C172 lines the [4Fe-4S] cluster pocket. Iminosuccinate is bound by residues 198-200 and T215; that span reads HPE. C260 lines the [4Fe-4S] cluster pocket.

It belongs to the quinolinate synthase family. Type 2 subfamily. Requires [4Fe-4S] cluster as cofactor.

It localises to the cytoplasm. It carries out the reaction iminosuccinate + dihydroxyacetone phosphate = quinolinate + phosphate + 2 H2O + H(+). It participates in cofactor biosynthesis; NAD(+) biosynthesis; quinolinate from iminoaspartate: step 1/1. Functionally, catalyzes the condensation of iminoaspartate with dihydroxyacetone phosphate to form quinolinate. The chain is Quinolinate synthase from Alkaliphilus metalliredigens (strain QYMF).